Here is a 60-residue protein sequence, read N- to C-terminus: Ribosome biogenesis protein Nop10 (60 aa).

The protein belongs to the NOP10 family.

Its function is as follows. Involved in ribosome biogenesis; more specifically in 18S rRNA pseudouridylation and in cleavage of pre-rRNA. This Haloquadratum walsbyi (strain DSM 16790 / HBSQ001) protein is Ribosome biogenesis protein Nop10.